The primary structure comprises 141 residues: Fluoride-specific ion channel FluC 1 (141 aa).

4 helical membrane-spanning segments follow: residues 12–32 (LYALIAAGSVIGGCARYLVGV), 44–64 (WATLFVNVTGSFVIGFYAAIA), 79–99 (FVMTGICGGYTTFSGFSLETF), and 107–127 (ALAALINLGVSPMSWLVAVWL). Gly86 and Thr89 together coordinate Na(+).

This sequence belongs to the fluoride channel Fluc/FEX (TC 1.A.43) family.

The protein localises to the cell inner membrane. It carries out the reaction fluoride(in) = fluoride(out). With respect to regulation, na(+) is not transported, but it plays an essential structural role and its presence is essential for fluoride channel function. In terms of biological role, fluoride-specific ion channel. Important for reducing fluoride concentration in the cell, thus reducing its toxicity. The sequence is that of Fluoride-specific ion channel FluC 1 from Rhodopseudomonas palustris (strain BisB18).